Here is a 227-residue protein sequence, read N- to C-terminus: MNSIEFPLLDQKTKNSVISTTLNDLSNWSRLSSLWPLLYGTSCCFIEFASLIGSRFDFDRYGLVPRSSPRQADLILTAGTVTMKMAPSLVRLYEQMPEPKYVIAMGACTITGGMFSTDSYSTVRGVDKLIPVDVYLPGCPPKPEAVIDAITKLRKKISREIDEDPISYQRENRSFTTNHKFDVGRSTHTGNSNQGLFYQPSSISEMTSDTFLKYKKVQYPATNEKVN.

Positions 43, 44, 108, and 139 each coordinate [4Fe-4S] cluster.

Belongs to the complex I 20 kDa subunit family. As to quaternary structure, NDH is composed of at least 16 different subunits, 5 of which are encoded in the nucleus. [4Fe-4S] cluster is required as a cofactor.

The protein localises to the plastid. It is found in the chloroplast thylakoid membrane. The catalysed reaction is a plastoquinone + NADH + (n+1) H(+)(in) = a plastoquinol + NAD(+) + n H(+)(out). The enzyme catalyses a plastoquinone + NADPH + (n+1) H(+)(in) = a plastoquinol + NADP(+) + n H(+)(out). In terms of biological role, NDH shuttles electrons from NAD(P)H:plastoquinone, via FMN and iron-sulfur (Fe-S) centers, to quinones in the photosynthetic chain and possibly in a chloroplast respiratory chain. It has NADH- and deamino-NADH-specific dehydrogenase activity, using ferricyanide or quinones as acceptors. The immediate electron acceptor for the enzyme in this species is believed to be plastoquinone. Couples the redox reaction to proton translocation, and thus conserves the redox energy in a proton gradient. The protein is NAD(P)H-quinone oxidoreductase subunit K, chloroplastic of Pisum sativum (Garden pea).